The chain runs to 356 residues: Cysteine protease XCP2 (356 aa).

A signal peptide spans 1-26 (MALSSPSRILCFALALSAASLSLSFA). A propeptide spans 27–137 (SSHDYSIVGY…AEFAYRDVEA (111 aa)) (activation peptide). 3 disulfides stabilise this stretch: cysteine 159–cysteine 201, cysteine 193–cysteine 234, and cysteine 292–cysteine 343. Cysteine 162 is a catalytic residue. Asparagine 181 is a glycosylation site (N-linked (GlcNAc...) asparagine). Active-site residues include histidine 298 and asparagine 318.

It belongs to the peptidase C1 family. As to quaternary structure, interacts with PRN2. Mostly expressed in roots, stems and flowers. Confined to tracheary elements, and specifically to xylem.

The protein localises to the vacuole. It is found in the cell membrane. Cysteine protease involved in xylem tracheary element (TE) autolysis during xylogenesis in roots. Participates in micro autolysis within the intact central vacuole before mega autolysis is initiated by tonoplast implosion. Involved in susceptibility to the bacterial plant pathogen Ralstonia solanacearum. The chain is Cysteine protease XCP2 from Arabidopsis thaliana (Mouse-ear cress).